A 308-amino-acid chain; its full sequence is Ferrochelatase (308 aa).

2 residues coordinate Fe cation: His167 and Glu239.

It belongs to the ferrochelatase family.

The protein localises to the cytoplasm. The enzyme catalyses heme b + 2 H(+) = protoporphyrin IX + Fe(2+). The protein operates within porphyrin-containing compound metabolism; protoheme biosynthesis; protoheme from protoporphyrin-IX: step 1/1. Functionally, catalyzes the ferrous insertion into protoporphyrin IX. The sequence is that of Ferrochelatase from Thermoplasma acidophilum (strain ATCC 25905 / DSM 1728 / JCM 9062 / NBRC 15155 / AMRC-C165).